The following is a 248-amino-acid chain: Peptidyl-tRNA hydrolase (248 aa).

Tyr14 is a binding site for tRNA. Catalysis depends on His19, which acts as the Proton acceptor. TRNA is bound by residues Phe64, Asn66, and Asn112. Residues 190 to 248 are disordered; that stretch reads PRSSTGEASKGRKKAQKSEPGVAKTPAKAATPEAPAAGDIPAAPEDSRSPMQKLLDKFK. Low complexity predominate over residues 212–226; the sequence is AKTPAKAATPEAPAA.

This sequence belongs to the PTH family. In terms of assembly, monomer.

The protein localises to the cytoplasm. The catalysed reaction is an N-acyl-L-alpha-aminoacyl-tRNA + H2O = an N-acyl-L-amino acid + a tRNA + H(+). In terms of biological role, hydrolyzes ribosome-free peptidyl-tRNAs (with 1 or more amino acids incorporated), which drop off the ribosome during protein synthesis, or as a result of ribosome stalling. Its function is as follows. Catalyzes the release of premature peptidyl moieties from peptidyl-tRNA molecules trapped in stalled 50S ribosomal subunits, and thus maintains levels of free tRNAs and 50S ribosomes. This Ruegeria sp. (strain TM1040) (Silicibacter sp.) protein is Peptidyl-tRNA hydrolase.